A 183-amino-acid chain; its full sequence is Helofensin-1 (183 aa).

An N-terminal signal peptide occupies residues 1 to 26 (MQMDWLFIAVVSAIGLLSSGVPGTQG). The C(6)C(4)C(9)C(6)CC 1; approximate repeat unit spans residues 27–64 (AYTTEQCRALNGTCRFYACFPKNVVIGKCDWLGWGCCA). The C(6)C(4)C(9)C(6)CC 2; approximate repeat unit spans residues 65–101 (RTPLERCTAKKGTCTASGCTETDTDHGPCDGGAQCCQ). The C(6)C(4)C(9)C(6)CC 3; approximate repeat unit spans residues 102–139 (RDPVKYCKFHGNVCGRGKCPMDHIPIGEQCMPGYPCCK). Residues 140-177 (RDGPAYCKSKGGKCLRRCSQIVPTDIIGVCADGVPCCK) form a C(6)C(4)C(9)C(6)CC 4; approximate repeat.

Belongs to the beta-defensin family. Helofensin subfamily. As to expression, expressed by the mandibular venom gland.

The protein localises to the secreted. Functionally, lethal toxin which possesses an inhibitory effect on direct electrical stimulation of the isolated hemi-diaphragm of mice. Neither hemorrhagic nor hemolytic activities are detected. Phospholipase A2 activity, proteolytic activity and arginine esterolytic activity are absent. This Heloderma suspectum cinctum (Banded Gila monster) protein is Helofensin-1.